The primary structure comprises 207 residues: Casparian strip membrane protein 1 (207 aa).

At Ala-2 the chain carries N-acetylalanine. At 2-44 (AKESTTIDVGEPNTMTKSTSHVVVDEKKKKGFVAAAAGGGYKR) the chain is on the cytoplasmic side. The helical transmembrane segment at 45–65 (GLAVFDFLLRLAAIGITIGAS) threads the bilayer. Residues 66–95 (SVMFTAEETLPFFTQFLQFQAGYDDFPTFQ) lie on the Extracellular side of the membrane. The helical transmembrane segment at 96–116 (FFVIAIAIVASYLVLSLPFSI) threads the bilayer. Over 117 to 128 (VTIVRPLAVAPR) the chain is Cytoplasmic. A helical membrane pass occupies residues 129 to 149 (LILLISDTVVLTLTTAAAAAA). The Extracellular segment spans residues 150 to 181 (ASIVYLAHNGNTNTNWLPICQQFGDFCQTAST). The chain crosses the membrane as a helical span at residues 182–202 (AVVAASISVAFFVLLIVISAI). Topologically, residues 203–207 (ALKRH) are cytoplasmic.

Belongs to the Casparian strip membrane proteins (CASP) family. In terms of assembly, homodimer and heterodimers.

It localises to the cell membrane. Its function is as follows. Regulates membrane-cell wall junctions and localized cell wall deposition. Required for establishment of the Casparian strip membrane domain (CSD) and the subsequent formation of Casparian strips, a cell wall modification of the root endodermis that determines an apoplastic barrier between the intraorganismal apoplasm and the extraorganismal apoplasm and prevents lateral diffusion. The protein is Casparian strip membrane protein 1 of Raphanus raphanistrum (Wild radish).